The following is a 110-amino-acid chain: Pathogenesis-related protein (110 aa).

Positions 1–19 (AFLLAATLTISSHMQEAGA) are cleaved as a signal peptide.

This sequence belongs to the thaumatin family.

The polypeptide is Pathogenesis-related protein (Juniperus virginiana (Eastern redcedar)).